A 426-amino-acid chain; its full sequence is Trophoblast glycoprotein (426 aa).

The signal sequence occupies residues 1-31 (MPGAGSRGPSAGDGRLRLARLALVLLGWVSA). The Extracellular segment spans residues 32–361 (SAPSSSVPSS…AVLPQSLQTS (330 aa)). Residues 33–47 (APSSSVPSSSTSPAA) are compositionally biased toward low complexity. Residues 33 to 53 (APSSSVPSSSTSPAAFLASGS) are disordered. The region spanning 53–91 (SAQPPPAERCPAACECSEAARTVKCVNRNLLEVPADLPP) is the LRRNT domain. 2 cysteine pairs are disulfide-bonded: C62–C68 and C66–C77. 7 LRR repeats span residues 92–113 (YVRNLFLTGNQMTVLPAGAFAR), 116–139 (PLADLEALNLSGNHLKEVCAGAFE), 141–163 (LPGLRRLDLSHNPLTNLSAFAFA), 172–210 (PSPLEELILNHIVPPEDQRQNGSFEGMVAFEGMVAAALR), 215–238 (LRGLTRLELASNHFLFLPRDLLAQ), 239–261 (LPSLRYLDLRNNSLVSLTYASFR), and 262–281 (NLTHLESLHLEDNALKVLHN). N124 carries an N-linked (GlcNAc...) asparagine glycan. A glycan (N-linked (GlcNAc...) asparagine) is linked at N281. One can recognise an LRRCT domain in the interval 289–352 (GLAHVKVFLD…LNSSDLDCDA (64 aa)). 2 disulfides stabilise this stretch: C304/C329 and C306/C350. The chain crosses the membrane as a helical span at residues 362-382 (YVFLGIVLALIGAIFLLVLYL). Topologically, residues 383–426 (NRKGIKKWMHNIRDACRDHMEGYHYRYEINADPRLTNLSSNSDV) are cytoplasmic. At S424 the chain carries Phosphoserine.

In terms of processing, highly glycosylated. In terms of tissue distribution, highly expressed in embryo and placenta. In adult, expressed only in brain and ovary. Not detected in kidney small intestine, heart, spleen, testis, liver, lung, thymus and stomach.

Its subcellular location is the cell membrane. Functionally, may function as an inhibitor of Wnt/beta-catenin signaling by indirectly interacting with LRP6 and blocking Wnt3a-dependent LRP6 internalization. The polypeptide is Trophoblast glycoprotein (Tpbg) (Mus musculus (Mouse)).